We begin with the raw amino-acid sequence, 3046 residues long: Nucleosome-remodeling factor subunit BPTF (3046 aa).

Positions 1-232 are disordered; that stretch reads MRGRRGRPPK…DIPPLEFPKS (232 aa). Pro residues predominate over residues 22–33; the sequence is PAPPPPPPPPTS. A compositionally biased stretch (low complexity) spans 62–72; that stretch reads TRLSSPRGGSS. Residues 78–87 show a composition bias toward pro residues; it reads PPPPPAPPST. The segment covering 91 to 110 has biased composition (gly residues); that stretch reads GRGGRGGGGGRTGGGGGGGH. The span at 129–186 shows a compositional bias: acidic residues; the sequence is HESEEEEEEEDMVSEEEEEEDGDAEETQDSEDDEEDEMEEDDDDSDYPEEMEDDDDDA. Over residues 190–203 the composition is skewed to low complexity; the sequence is TESSFRSHSTYSST. Residues 205–215 are compositionally biased toward basic residues; that stretch reads GRRKPRVHRPR. Ser216 carries the post-translational modification Phosphoserine. One can recognise a DDT domain in the interval 240–300; sequence NEHIMNVIAI…LKAVLREEDT (61 aa). A PHD-type 1 zinc finger spans residues 390 to 437; that stretch reads DDHCRVCHKLGDLLCCETCSAVYHLECVKPPLEEVPEDEWQCEVCVAH. 2 stretches are compositionally biased toward basic and acidic residues: residues 567 to 609 and 616 to 628; these read IDNV…SDDK and EQGKSEEPTEVGD. The segment at 567–774 is disordered; that stretch reads IDNVKSPEET…GAGKGASGST (208 aa). Phosphoserine is present on Ser572. Residues 574-604 adopt a coiled-coil conformation; it reads EETEKDKNETENDSKDAEKNREEFEDQSLEK. 2 stretches are compositionally biased toward polar residues: residues 631–653 and 690–705; these read NSVSANLGDNTTNATSEETSPSE and TCESSNTSATTTSIQP. Residues 640–749 are interaction with KEAP1; that stretch reads NTTNATSEET…PVSIQEEIVG (110 aa). Residues 706–723 show a composition bias toward low complexity; sequence NLENSNSSSELNSSQSES. The segment covering 725–738 has biased composition (basic and acidic residues); the sequence is KAADDPENGERESH. A phosphoserine mark is found at Ser763 and Ser817. An interaction with MAZ region spans residues 839-921; that stretch reads YFKLGQEGKY…QLENNIPSSF (83 aa). Lys880 is modified (N6-acetyllysine). Positions 978-1007 form a coiled coil; that stretch reads MTSIEREEKEKVKKKEKKQEEEETMQQATW. A disordered region spans residues 1057-1157; sequence YRKSLEGTKN…MKTESHVNCQ (101 aa). Thr1064 carries the post-translational modification Phosphothreonine. Basic and acidic residues-rich tracts occupy residues 1087–1102 and 1113–1152; these read IKIEPDSEKDEVKGSD and DISKITEKKDQDVKELLDSDSDKPCKEEPMEVDDDMKTES. Glycyl lysine isopeptide (Lys-Gly) (interchain with G-Cter in SUMO2) cross-links involve residues Lys1088, Lys1138, and Lys1209. 4 disordered regions span residues 1215-1339, 1371-1448, 1465-1537, and 1605-1706; these read KGIG…GNDF, IVSS…FRTR, GEST…NGKD, and NSSE…GESK. Polar residues-rich tracts occupy residues 1220 to 1232, 1242 to 1257, and 1266 to 1285; these read TSTNSSKNLSESP, QSDSMRQEQSPNANND, and CSESDSSVLRMSDPSHTTNK. At Ser1231 the chain carries Phosphoserine. Residues 1287-1305 show a composition bias toward basic and acidic residues; it reads YPKDRVLDDVSIRSPETKC. Ser1300 carries the post-translational modification Phosphoserine. Residue Thr1303 is modified to Phosphothreonine. Residue Ser1310 is modified to Phosphoserine. Low complexity predominate over residues 1372–1386; the sequence is VSSSKSALHSSVPKS. Polar residues-rich tracts occupy residues 1409–1426 and 1434–1444; these read SESNSTLENSSDTVSIQD and VQNSNESISEQ. Residues 1491–1525 are compositionally biased toward basic and acidic residues; sequence KKLEERPVNKCSDQIKLKNTTDKKNNENRESEKKG. The span at 1629 to 1656 shows a compositional bias: polar residues; that stretch reads TLPSTKESDSTQTTTPSASCPESNSVNQ. Lys1730 participates in a covalent cross-link: Glycyl lysine isopeptide (Lys-Gly) (interchain with G-Cter in SUMO2). Disordered regions lie at residues 1973–2003 and 2041–2070; these read VPETPKETPTPQRKGLRSSALRPKRPETPKQ and QAKKRLEQQKPTVIATSTTSPTSSTTSTIS. Positions 2022–2050 form a coiled coil; sequence EIRAFAERVEKEKAQAVEQQAKKRLEQQK. Residues 2054–2070 are compositionally biased toward low complexity; sequence IATSTTSPTSSTTSTIS. Ser2098 carries the post-translational modification Phosphoserine. Arg2155 is modified (omega-N-methylarginine). The tract at residues 2160 to 2180 is disordered; that stretch reads TIRPNTSGSGGTTSNSQVITG. Asymmetric dimethylarginine is present on residues Arg2162, Arg2184, and Arg2191. Over residues 2232–2256 the composition is skewed to polar residues; it reads VSAPNTVSSTPGQKSLTSATSTSNI. Disordered stretches follow at residues 2232–2270, 2346–2549, 2714–2733, and 2795–2858; these read VSAPNTVSSTPGQKSLTSATSTSNIQSSASQPPRPQQGQ, TAST…RPQL, QAAKKRKREESVEQKRSKQN, and PCPP…ISTT. 2 stretches are compositionally biased toward low complexity: residues 2257–2270 and 2346–2362; these read QSSASQPPRPQQGQ and TASTTTTTVSTTAAGTG. Positions 2363–2375 are enriched in polar residues; the sequence is EQRQSKLSPQMQV. The span at 2391–2431 shows a compositional bias: low complexity; it reads PAEAQPQTAQPSAQPQPQTQPQSPAQPEVQTQPEVQTQTTV. Positions 2432–2485 are enriched in polar residues; it reads SSHVPSEAQPTHAQSSKPQVAAQSQPQSNVQGQSPVRVQSPSQTRIRPSTPSQL. Ser2465 carries the post-translational modification Phosphoserine. Residues 2486–2538 are compositionally biased toward low complexity; the sequence is SPGQQSQVQTTTSQPIPIQPHTSLQIPSQGQPQSQPQVQSSTQTLSSGQTLNQ. Residues 2706–2732 are a coiled coil; it reads DKIDKEEKQAAKKRKREESVEQKRSKQ. Residues 2714–2729 show a composition bias toward basic and acidic residues; sequence QAAKKRKREESVEQKR. Residues 2795–2818 are compositionally biased toward pro residues; the sequence is PCPPVTPAPPAPPAPPPSPPPPPA. A compositionally biased stretch (basic and acidic residues) spans 2838–2847; that stretch reads KREEEKDSSS. A PHD-type 2 zinc finger spans residues 2867 to 2918; that stretch reads KLYCICKTPYDESKFYIGCDRCQNWYHGRCVGILQSEAELIDEYVCPQCQST. The Bromo domain maps to 2927–3031; the sequence is PLTEKDYEGL…SFFVQKLKGF (105 aa).

The protein belongs to the PBTF family. As to quaternary structure, interacts with MAZ. Interacts with KEAP1. Component of the NURF-1 ISWI chromatin remodeling complex (also called the nucleosome-remodeling factor (NURF) complex) at least composed of SMARCA1 (isoform 2), BPTF, RBBP4 and RBBP7. Within the complex interacts with isoform 2 of SMARCA1. Component of the BPFT-SMARCA1 complex at least composed of SMARCA1 (isoform 1), BPFT, RBBP4 and RBBP7; the complex is catalytically inactive and does not remodel chromatin. Within the complex interacts with isoform 1 of SMARCA1. Component of the NURF-5 ISWI chromatin remodeling complex at least composed of SMARCA5/SNF2H and BPTF. Within NURF-5 ISWI chromatin remodeling complex interacts with SMARCA5/SNF2H. Post-translationally, phosphorylation enhances DNA-binding. Highly susceptible to proteolysis. Ubiquitously expressed, with highest levels in testis. Present in kidney, liver and brain. In the brain, highest levels are found in motor cortex (at protein level).

It is found in the cytoplasm. The protein resides in the nucleus. Its function is as follows. Regulatory subunit of the ATP-dependent NURF-1 and NURF-5 ISWI chromatin remodeling complexes, which form ordered nucleosome arrays on chromatin and facilitate access to DNA during DNA-templated processes such as DNA replication, transcription, and repair. The NURF-1 ISWI chromatin remodeling complex has a lower ATP hydrolysis rate than the NURF-5 ISWI chromatin remodeling complex. Within the NURF-1 ISWI chromatin-remodeling complex, binds to the promoters of En1 and En2 to positively regulate their expression and promote brain development. Histone-binding protein which binds to H3 tails trimethylated on 'Lys-4' (H3K4me3), which mark transcription start sites of active genes. Binds to histone H3 tails dimethylated on 'Lys-4' (H3K4Me2) to a lesser extent. May also regulate transcription through direct binding to DNA or transcription factors. The sequence is that of Nucleosome-remodeling factor subunit BPTF (BPTF) from Homo sapiens (Human).